Consider the following 92-residue polypeptide: Small ribosomal subunit protein uS19 (92 aa).

This sequence belongs to the universal ribosomal protein uS19 family.

In terms of biological role, protein S19 forms a complex with S13 that binds strongly to the 16S ribosomal RNA. The sequence is that of Small ribosomal subunit protein uS19 from Agrobacterium fabrum (strain C58 / ATCC 33970) (Agrobacterium tumefaciens (strain C58)).